Consider the following 55-residue polypeptide: uncharacterized protein (55 aa).

This is an uncharacterized protein from Orgyia pseudotsugata multicapsid polyhedrosis virus (OpMNPV).